The sequence spans 461 residues: tRNA modification GTPase MnmE (461 aa).

Positions 32, 89, and 128 each coordinate (6S)-5-formyl-5,6,7,8-tetrahydrofolate. The 164-residue stretch at 224–387 folds into the TrmE-type G domain; sequence GHALSIVGKP…LGQKISAFFP (164 aa). Asn-234 contacts K(+). Residues 234 to 239, 253 to 259, and 278 to 281 each bind GTP; these read NAGKSS, SDIKGTT, and DTAG. Ser-238 serves as a coordination point for Mg(2+). Ser-253, Ile-255, and Thr-258 together coordinate K(+). Thr-259 is a binding site for Mg(2+). Lys-461 is a (6S)-5-formyl-5,6,7,8-tetrahydrofolate binding site.

It belongs to the TRAFAC class TrmE-Era-EngA-EngB-Septin-like GTPase superfamily. TrmE GTPase family. Homodimer. Heterotetramer of two MnmE and two MnmG subunits. The cofactor is K(+).

The protein resides in the cytoplasm. In terms of biological role, exhibits a very high intrinsic GTPase hydrolysis rate. Involved in the addition of a carboxymethylaminomethyl (cmnm) group at the wobble position (U34) of certain tRNAs, forming tRNA-cmnm(5)s(2)U34. The sequence is that of tRNA modification GTPase MnmE from Helicobacter pylori (strain HPAG1).